Reading from the N-terminus, the 563-residue chain is Zinc finger protein 503 (563 aa).

Residues 1–10 (MITSPSASRN) show a composition bias toward polar residues. Disordered regions lie at residues 1–48 (MITS…PLRQ) and 101–226 (SQIG…TSVS). 2 stretches are compositionally biased toward low complexity: residues 19-33 (SSSS…AVAS) and 112-122 (SKLSSVTSNGS). Positions 174–194 (ATCQPFTPRTGSPNSSTSASP) are enriched in polar residues. Over residues 199–211 (GKGERDEKKDSDC) the composition is skewed to basic and acidic residues. Over residues 212 to 226 (NKNCSSDGSAPTSVS) the composition is skewed to polar residues. A C2H2-type zinc finger spans residues 431-459 (HVCNWVSANGPCDKRFSSSEELLNHLRTH).

It belongs to the Elbow/Noc family. As to quaternary structure, interacts with nlz1.

It localises to the nucleus. Its function is as follows. Required for segmental gene expression during hindbrain development. May function as a transcriptional repressor. The polypeptide is Zinc finger protein 503 (znf503) (Danio rerio (Zebrafish)).